The sequence spans 455 residues: Bifunctional protein GlmU (455 aa).

The tract at residues Met-1–Arg-226 is pyrophosphorylase. UDP-N-acetyl-alpha-D-glucosamine is bound by residues Leu-8–Gly-11, Lys-22, Gln-73, Gly-78–Thr-79, Tyr-99–Asp-101, Gly-136, Glu-151, Asn-166, and Asn-224. Asp-101 serves as a coordination point for Mg(2+). Mg(2+) is bound at residue Asn-224. Residues Thr-227–Lys-247 form a linker region. The tract at residues Gly-248–Lys-455 is N-acetyltransferase. Arg-330 and Lys-348 together coordinate UDP-N-acetyl-alpha-D-glucosamine. His-360 (proton acceptor) is an active-site residue. Residues Tyr-363 and Asn-374 each contribute to the UDP-N-acetyl-alpha-D-glucosamine site. Acetyl-CoA-binding positions include Ala-377, Asn-383–Tyr-384, Ser-402, Ala-420, and Arg-437.

The protein in the N-terminal section; belongs to the N-acetylglucosamine-1-phosphate uridyltransferase family. In the C-terminal section; belongs to the transferase hexapeptide repeat family. As to quaternary structure, homotrimer. Mg(2+) serves as cofactor.

The protein localises to the cytoplasm. The enzyme catalyses alpha-D-glucosamine 1-phosphate + acetyl-CoA = N-acetyl-alpha-D-glucosamine 1-phosphate + CoA + H(+). It catalyses the reaction N-acetyl-alpha-D-glucosamine 1-phosphate + UTP + H(+) = UDP-N-acetyl-alpha-D-glucosamine + diphosphate. The protein operates within nucleotide-sugar biosynthesis; UDP-N-acetyl-alpha-D-glucosamine biosynthesis; N-acetyl-alpha-D-glucosamine 1-phosphate from alpha-D-glucosamine 6-phosphate (route II): step 2/2. It functions in the pathway nucleotide-sugar biosynthesis; UDP-N-acetyl-alpha-D-glucosamine biosynthesis; UDP-N-acetyl-alpha-D-glucosamine from N-acetyl-alpha-D-glucosamine 1-phosphate: step 1/1. It participates in bacterial outer membrane biogenesis; LPS lipid A biosynthesis. In terms of biological role, catalyzes the last two sequential reactions in the de novo biosynthetic pathway for UDP-N-acetylglucosamine (UDP-GlcNAc). The C-terminal domain catalyzes the transfer of acetyl group from acetyl coenzyme A to glucosamine-1-phosphate (GlcN-1-P) to produce N-acetylglucosamine-1-phosphate (GlcNAc-1-P), which is converted into UDP-GlcNAc by the transfer of uridine 5-monophosphate (from uridine 5-triphosphate), a reaction catalyzed by the N-terminal domain. The protein is Bifunctional protein GlmU of Francisella tularensis subsp. novicida (strain U112).